A 1474-amino-acid chain; its full sequence is Adhesion G protein-coupled receptor L1 (1474 aa).

An N-terminal signal peptide occupies residues Met1–Gly24. Topologically, residues Leu25 to Leu858 are extracellular. Residues Ala40–Val129 enclose the SUEL-type lectin domain. 5 disulfides stabilise this stretch: Cys41/Cys71, Cys50/Cys128, Cys83/Cys115, Cys96/Cys102, and Cys140/Cys322. Glu42 lines the alpha-L-rhamnose pocket. A glycan (N-linked (GlcNAc...) asparagine) is linked at Asn98. Residue Gly117–Lys120 participates in alpha-L-rhamnose binding. Residues Val139 to Pro398 form the Olfactomedin-like domain. The disordered stretch occupies residues Asp400–Leu434. Residues Pro405–Leu434 are compositionally biased toward low complexity. Disulfide bonds link Cys480-Cys515 and Cys503-Cys532. N-linked (GlcNAc...) asparagine glycans are attached at residues Asn531, Asn640, Asn742, Asn801, Asn806, and Asn827. Residues Pro669–Tyr851 form the GAIN-B domain. Cystine bridges form between Cys802–Cys833 and Cys821–Cys835. A GPS region spans residues Cys802–Tyr851. The helical transmembrane segment at Leu859–Ile879 threads the bilayer. The Cytoplasmic segment spans residues Ser880–Asn893. A helical membrane pass occupies residues Thr894–Ile914. The Extracellular portion of the chain corresponds to Asp915–Glu920. The helical transmembrane segment at Ile921–Leu941 threads the bilayer. At Cys942 to Lys964 the chain is on the cytoplasmic side. Residues Tyr965–Asp985 traverse the membrane as a helical segment. At Tyr986–Tyr1002 the chain is on the extracellular side. A helical membrane pass occupies residues Phe1003 to Met1023. Residues Val1024 to Ala1050 lie on the Cytoplasmic side of the membrane. A helical transmembrane segment spans residues Leu1051 to Ile1071. Over Asn1072–Ser1075 the chain is Extracellular. A helical transmembrane segment spans residues Val1076–Phe1096. The Cytoplasmic portion of the chain corresponds to His1097–Leu1474. Omega-N-methylarginine is present on Arg1194. Residue Ser1220 is modified to Phosphoserine. Disordered regions lie at residues Phe1248–Asn1273, Arg1294–Ala1328, Glu1360–Pro1429, and Tyr1451–Leu1474. Pro residues-rich tracts occupy residues Gly1302–Pro1314 and Ala1408–Pro1420. Residue Ser1473 is modified to Phosphoserine.

It belongs to the G-protein coupled receptor 2 family. Adhesion G-protein coupled receptor (ADGR) subfamily. In terms of assembly, forms a heterodimer, consisting of a large extracellular region (p120) non-covalently linked to a seven-transmembrane moiety (p85). Interacts with syntaxin and with proteins of the SHANK family via the PDZ domain. Interacts (via extracellular domain) with FLRT1, FLRT2 and FLRT3 (via extracellular domain). Autoproteolytically cleaved into 2 subunits, an extracellular subunit and a seven-transmembrane subunit. This proteolytic processing takes place early in the biosynthetic pathway, either in the endoplasmic reticulum or in the early compartment of the Golgi apparatus.

Its subcellular location is the cell membrane. It is found in the cell projection. The protein localises to the axon. The protein resides in the growth cone. It localises to the synapse. Its subcellular location is the presynaptic cell membrane. It is found in the synaptosome. Its function is as follows. Calcium-independent receptor of high affinity for alpha-latrotoxin, an excitatory neurotoxin present in black widow spider venom which triggers massive exocytosis from neurons and neuroendocrine cells. Receptor for TENM2 that mediates heterophilic synaptic cell-cell contact and postsynaptic specialization. Receptor probably implicated in the regulation of exocytosis. In Homo sapiens (Human), this protein is Adhesion G protein-coupled receptor L1.